Here is a 142-residue protein sequence, read N- to C-terminus: Large ribosomal subunit protein uL13 (142 aa).

This sequence belongs to the universal ribosomal protein uL13 family. Part of the 50S ribosomal subunit.

In terms of biological role, this protein is one of the early assembly proteins of the 50S ribosomal subunit, although it is not seen to bind rRNA by itself. It is important during the early stages of 50S assembly. This is Large ribosomal subunit protein uL13 from Bordetella petrii (strain ATCC BAA-461 / DSM 12804 / CCUG 43448).